A 349-amino-acid polypeptide reads, in one-letter code: Galanin receptor type 1 (349 aa).

Residues 1 to 36 (MELAVGNLSEGNASWPEPPAPEPGPLFGIGVENFVT) are Extracellular-facing. N-linked (GlcNAc...) asparagine glycans are attached at residues Asn7 and Asn12. A helical membrane pass occupies residues 37–57 (LVVFGLIFALGVLGNSLVITV). Topologically, residues 58 to 70 (LARSKPGKPRSTT) are cytoplasmic. The helical transmembrane segment at 71-91 (NLFILNLSIADLAYLLFCIPF) threads the bilayer. Residues 92-109 (QATVYALPTWVLGAFICK) lie on the Extracellular side of the membrane. Cys108 and Cys187 are oxidised to a cystine. The chain crosses the membrane as a helical span at residues 110–131 (FIHYFFTVSMLVSIFTLAAMSV). Topologically, residues 132 to 151 (DRYVAIVHSRRSSSLRVSRN) are cytoplasmic. The helical transmembrane segment at 152–172 (ALLGVGCIWALSIAMASPVAY) threads the bilayer. The Extracellular segment spans residues 173-200 (HQGLFHPRASNQTFCWEQWPDPRHKKAY). N-linked (GlcNAc...) asparagine glycosylation occurs at Asn183. A helical transmembrane segment spans residues 201-221 (VVCTFVFGYLLPLLLICFCYA). The Cytoplasmic portion of the chain corresponds to 222–248 (KVLNHLHKKLKNMSKKSEASKKKTAQT). Residues 249 to 269 (VLVVVVVFGISWLPHHIIHLW) form a helical membrane-spanning segment. Residues 270–271 (AE) are Extracellular-facing. Residues 272–292 (FGVFPLTPASFLFRITAHCLA) traverse the membrane as a helical segment. Over 293 to 349 (YSNSSVNPIIYAFLSENFRKAYKQVFKCHIRKDSHLSDTKESKSRIDTPPSTNCTHV) the chain is Cytoplasmic. A lipid anchor (S-palmitoyl cysteine) is attached at Cys320.

This sequence belongs to the G-protein coupled receptor 1 family. As to quaternary structure, interacts with GRP39 AND HTR1A. In terms of processing, palmitoylated on at least one of the three cysteine residues present in the C-terminal part.

It is found in the cell membrane. Its function is as follows. Receptor for the hormone galanin. The activity of this receptor is mediated by G proteins that inhibit adenylate cyclase activity. The sequence is that of Galanin receptor type 1 (GALR1) from Homo sapiens (Human).